We begin with the raw amino-acid sequence, 335 residues long: MSGYPPSSQGYGYGGNPPPPQPPYGSTGNNPPPYGSSGSNPPPPYGSSASSPYAVPYGAQPAPYGAPPSAPYASLPGDHNKPHKEKPHGASYGSPSPGGYGAHPSSGPSDYGGYGGAPQQSGHGGGYGGAPQQSGHGGGYGAPPPQASYGSPFASLVPSAFPPGTDPNIVACFQAADRDNSGFIDDKELQGALSSYNQSFSIRTVHLLMYLFTNSNVRKIGPKEFTSLFFSLQNWRSIFERFDKDRSGRIDTNELRDALMSLGFSVSPVILDLLVSKFDKSGGRNRAIEYDNFIECCLTVKGLTEKFKEKDTALSGSAIFNYENFMLTVLPFLVA.

Positions 1–10 (MSGYPPSSQG) are enriched in low complexity. Residues 1 to 154 (MSGYPPSSQG…PQASYGSPFA (154 aa)) are disordered. Over residues 30 to 45 (NPPPYGSSGSNPPPPY) the composition is skewed to pro residues. Over residues 46–63 (GSSASSPYAVPYGAQPAP) the composition is skewed to low complexity. Positions 110–141 (DYGGYGGAPQQSGHGGGYGGAPQQSGHGGGYG) are enriched in gly residues. EF-hand domains follow at residues 164–199 (GTDP…YNQS) and 230–265 (FSLQ…LGFS). Residues aspartate 177, aspartate 179, serine 181, glutamate 188, aspartate 243, aspartate 245, serine 247, arginine 249, and glutamate 254 each contribute to the Ca(2+) site.

Its function is as follows. Potential calcium sensor. The polypeptide is Probable calcium-binding protein CML49 (CML49) (Arabidopsis thaliana (Mouse-ear cress)).